A 240-amino-acid polypeptide reads, in one-letter code: Probable septum site-determining protein MinC (240 aa).

This sequence belongs to the MinC family. As to quaternary structure, interacts with MinD and FtsZ.

Functionally, cell division inhibitor that blocks the formation of polar Z ring septums. Rapidly oscillates between the poles of the cell to destabilize FtsZ filaments that have formed before they mature into polar Z rings. Prevents FtsZ polymerization. This Acinetobacter baumannii (strain ATCC 17978 / DSM 105126 / CIP 53.77 / LMG 1025 / NCDC KC755 / 5377) protein is Probable septum site-determining protein MinC.